A 130-amino-acid chain; its full sequence is Ornithine decarboxylase antizyme (130 aa).

A compositionally biased stretch (basic and acidic residues) spans 1-14 (SDVPVHHRTDHDRA). Residues 1–56 (SDVPVHHRTDHDRASLLTGSSRKSSVDSAGGSLFEASSRASSPSSSSSSECSDTES) are disordered. A compositionally biased stretch (polar residues) spans 17–27 (LTGSSRKSSVD). The segment covering 32-51 (SLFEASSRASSPSSSSSSEC) has biased composition (low complexity).

The protein belongs to the ODC antizyme family. In terms of assembly, interacts with ODC1 and thereby sterically blocks ODC homodimerization.

Its function is as follows. Ornithine decarboxylase (ODC) antizyme protein that negatively regulates ODC activity and intracellular polyamine biosynthesis and uptake in response to increased intracellular polyamine levels. Binds to ODC monomers, inhibiting the assembly of the functional ODC homodimer, and targets the monomers for ubiquitin-independent proteolytic destruction by the 26S proteasome. The protein is Ornithine decarboxylase antizyme (Oda) of Drosophila virilis (Fruit fly).